Reading from the N-terminus, the 444-residue chain is Putative GTP cyclohydrolase URC1 (444 aa).

A GTP-binding site is contributed by 268 to 272 (RVHDE). Zn(2+) contacts are provided by Cys273, Cys284, and Cys286. Residue 315–317 (EGR) participates in GTP binding. Asp353 serves as the catalytic Proton acceptor. The Nucleophile role is filled by Arg355. 2 residues coordinate GTP: Ser377 and Lys382.

The protein belongs to the GTP cyclohydrolase II family.

It is found in the cytoplasm. It localises to the nucleus. Involved in uracil catabolism. The protein is Putative GTP cyclohydrolase URC1 (URC1) of Lachancea kluyveri (Yeast).